The primary structure comprises 892 residues: Putative leucine-rich repeat receptor-like serine/threonine-protein kinase At2g04300 (892 aa).

A signal peptide spans 1 to 26; the sequence is MKTHPQAILLCVLFFITFGLLHVVEA. Topologically, residues 27 to 523 are extracellular; sequence GNQEGFISLD…GAKKKNVVVL (497 aa). N-linked (GlcNAc...) asparagine glycans are attached at residues asparagine 99, asparagine 186, asparagine 241, asparagine 267, and asparagine 294. LRR repeat units follow at residues 375–396, 399–422, 423–444, and 447–467; these read IKNIQNTYGVSKTSWQGDPCVP, FMWDGLNCNNSYISTPPTITFLNL, SSSHLTGIIASAIQNLTHLQNL, and SNNNLTGGVPEFLAGLKSLLV. Asparagine 407, asparagine 421, asparagine 437, asparagine 450, and asparagine 469 each carry an N-linked (GlcNAc...) asparagine glycan. A helical transmembrane segment spans residues 524 to 544; that stretch reads VVVSIALVVVLGSALALFLVF. Residues 545–892 lie on the Cytoplasmic side of the membrane; sequence RKRKTPRNEV…FGTEYTPEAR (348 aa). Threonine 573 is subject to Phosphothreonine. The region spanning 582–855 is the Protein kinase domain; sequence NNFEKILGKG…QVVIELNECL (274 aa). ATP contacts are provided by residues 588–596 and lysine 610; that span reads LGKGGFGMV. The residue at position 655 (tyrosine 655) is a Phosphotyrosine. Aspartate 707 (proton acceptor) is an active-site residue. Residues threonine 742 and threonine 747 each carry the phosphothreonine modification. Phosphotyrosine is present on tyrosine 755.

The protein belongs to the protein kinase superfamily. Ser/Thr protein kinase family.

The protein localises to the cell membrane. It catalyses the reaction L-seryl-[protein] + ATP = O-phospho-L-seryl-[protein] + ADP + H(+). The enzyme catalyses L-threonyl-[protein] + ATP = O-phospho-L-threonyl-[protein] + ADP + H(+). This Arabidopsis thaliana (Mouse-ear cress) protein is Putative leucine-rich repeat receptor-like serine/threonine-protein kinase At2g04300.